Consider the following 896-residue polypeptide: MADTTVEKLASEVGKSADRLVEQFSEAGIKKSKADTVSESEKQQLLEFLKKQHGGESAPTKMTLQRKSVSTLSVGSGSASKDVKVEVRKKRTFVKRDPAADAEAEAAAKAEAEVKAAEEAASKAKADAEAKAKAEAKAKADAEAKEKAKASAAEKAKPVAVTAEEKAAQDEADKLQAAKDTAAKAKADEEAKAAAEIARKLAEENSARWAEEEKQRKESEKTGDHHVTTSTEARAAEDTADANAEKRGRRPRKATPAPAAAPANTGKGKRRGGKDNRRDSRNARGGRNARNNRSVAPESMDHAFTKPVAAVKTDVSIGETVSVSELASKMSIKATEIIKQMMKMGSMVTINQVLDQETAQLVAEEMGHKVVLTRENELEHQVLADRDANIQAESRAPVVTIMGHVDHGKTSLLDYIRRAKVASGEAGGITQHIGAYHVETDNGMITFLDTPGHAAFTAMRARGAQATDIVILVVAADDGVMPQTIEAIQHAKAGGVPLIVAVNKIDKPEADPERVKSELSQHGVMSEDWGGNNMFVHVSAKSGEGIDELLEGILLEAEVLELKAIKEGMAAGVVVESKLDKGRGPVATVLVQEGTLKQGDIVLCGLEYGKVRAMRDENGRAIKEAGPSIPVEILGLSGVPSAGDEATVVRDERKAREVALYRQGKFRDVKLARQQKSKLENMFANMVEGEVQELNIILKADVQGSLEAIADSLNKLSTDEVKVNIIARGVGGLTETDASLAAASNAIMIGFNIRADAQARKVIDAESVDLRYYSVIYHLIDEVRNAMSGLLAPEFKQVILGLAEVRDVFKSPKIGAIAGCMVTEGTIKRSAPIRVLRENVVIYEGELESLRRFKDDVADVRNGMECGIGVKNYNDVRVGDQIEVFETIEIARSLEE.

Disordered regions lie at residues 53–81 and 117–301; these read HGGE…SASK and AEEA…ESMD. A compositionally biased stretch (polar residues) spans 60 to 79; it reads TKMTLQRKSVSTLSVGSGSA. Basic and acidic residues predominate over residues 117–227; it reads AEEAASKAKA…ESEKTGDHHV (111 aa). Residues 254-266 show a composition bias toward low complexity; it reads ATPAPAAAPANTG. A compositionally biased stretch (basic and acidic residues) spans 273-282; that stretch reads GKDNRRDSRN. Low complexity predominate over residues 283-294; that stretch reads ARGGRNARNNRS. Positions 394–563 constitute a tr-type G domain; it reads SRAPVVTIMG…LLEAEVLELK (170 aa). Residues 403–410 form a G1 region; sequence GHVDHGKT. A GTP-binding site is contributed by 403–410; that stretch reads GHVDHGKT. Residues 428-432 are G2; that stretch reads GITQH. Residues 449 to 452 form a G3 region; the sequence is DTPG. GTP-binding positions include 449 to 453 and 503 to 506; these read DTPGH and NKID. A G4 region spans residues 503 to 506; it reads NKID. Residues 539–541 form a G5 region; it reads SAK.

This sequence belongs to the TRAFAC class translation factor GTPase superfamily. Classic translation factor GTPase family. IF-2 subfamily.

The protein resides in the cytoplasm. In terms of biological role, one of the essential components for the initiation of protein synthesis. Protects formylmethionyl-tRNA from spontaneous hydrolysis and promotes its binding to the 30S ribosomal subunits. Also involved in the hydrolysis of GTP during the formation of the 70S ribosomal complex. The sequence is that of Translation initiation factor IF-2 from Shewanella sediminis (strain HAW-EB3).